The sequence spans 325 residues: Tetraacyldisaccharide 4'-kinase (325 aa).

55 to 62 is a binding site for ATP; it reads TAGGNGKT.

This sequence belongs to the LpxK family.

The catalysed reaction is a lipid A disaccharide + ATP = a lipid IVA + ADP + H(+). Its pathway is glycolipid biosynthesis; lipid IV(A) biosynthesis; lipid IV(A) from (3R)-3-hydroxytetradecanoyl-[acyl-carrier-protein] and UDP-N-acetyl-alpha-D-glucosamine: step 6/6. In terms of biological role, transfers the gamma-phosphate of ATP to the 4'-position of a tetraacyldisaccharide 1-phosphate intermediate (termed DS-1-P) to form tetraacyldisaccharide 1,4'-bis-phosphate (lipid IVA). This Salmonella enteritidis PT4 (strain P125109) protein is Tetraacyldisaccharide 4'-kinase.